We begin with the raw amino-acid sequence, 71 residues long: Disintegrin horridistatin-2 (71 aa).

In terms of domain architecture, Disintegrin spans 1–71; it reads GEECDCGSPA…ADCPRNGLYG (71 aa). Cystine bridges form between cysteine 4/cysteine 19, cysteine 6/cysteine 14, cysteine 13/cysteine 36, cysteine 27/cysteine 33, cysteine 32/cysteine 57, and cysteine 45/cysteine 64. Residues 49–51 carry the Cell attachment site motif; that stretch reads RGD.

This sequence belongs to the venom metalloproteinase (M12B) family. P-II subfamily. P-IIa sub-subfamily. As to quaternary structure, monomer (disintegrin). In terms of tissue distribution, expressed by the venom gland.

The protein resides in the secreted. In terms of biological role, inhibits ADP-induced platelet aggregation (IC(50) is 16.2 nM) by binding to alpha-IIb/beta-3 (ITGA2B/ITGB3). The protein is Disintegrin horridistatin-2 of Crotalus horridus (Timber rattlesnake).